Reading from the N-terminus, the 264-residue chain is Thiazole synthase (264 aa).

The Schiff-base intermediate with DXP role is filled by Lys-100. 1-deoxy-D-xylulose 5-phosphate-binding positions include Gly-161, Ala-187 to Gly-188, and Asn-209 to Thr-210.

This sequence belongs to the ThiG family. In terms of assembly, homotetramer. Forms heterodimers with either ThiH or ThiS.

Its subcellular location is the cytoplasm. It carries out the reaction [ThiS sulfur-carrier protein]-C-terminal-Gly-aminoethanethioate + 2-iminoacetate + 1-deoxy-D-xylulose 5-phosphate = [ThiS sulfur-carrier protein]-C-terminal Gly-Gly + 2-[(2R,5Z)-2-carboxy-4-methylthiazol-5(2H)-ylidene]ethyl phosphate + 2 H2O + H(+). The protein operates within cofactor biosynthesis; thiamine diphosphate biosynthesis. Its function is as follows. Catalyzes the rearrangement of 1-deoxy-D-xylulose 5-phosphate (DXP) to produce the thiazole phosphate moiety of thiamine. Sulfur is provided by the thiocarboxylate moiety of the carrier protein ThiS. In vitro, sulfur can be provided by H(2)S. This Nitrosospira multiformis (strain ATCC 25196 / NCIMB 11849 / C 71) protein is Thiazole synthase.